Here is a 319-residue protein sequence, read N- to C-terminus: L-lactate dehydrogenase 2 (319 aa).

NAD(+) contacts are provided by residues valine 17, aspartate 38, lysine 43, tyrosine 69, and 83–84 (GA). 2 residues coordinate substrate: glutamine 86 and arginine 92. NAD(+) is bound by residues serine 105, 122-124 (ATN), and serine 147. 124 to 127 (NPVD) is a substrate binding site. 152–155 (DSGR) provides a ligand contact to substrate. Beta-D-fructose 1,6-bisphosphate-binding residues include arginine 157 and histidine 172. Histidine 179 (proton acceptor) is an active-site residue. Phosphotyrosine is present on tyrosine 224. Substrate is bound at residue threonine 233.

It belongs to the LDH/MDH superfamily. LDH family. As to quaternary structure, homotetramer.

It localises to the cytoplasm. The catalysed reaction is (S)-lactate + NAD(+) = pyruvate + NADH + H(+). It participates in fermentation; pyruvate fermentation to lactate; (S)-lactate from pyruvate: step 1/1. Its activity is regulated as follows. Allosterically activated by fructose 1,6-bisphosphate (FBP). Functionally, catalyzes the conversion of lactate to pyruvate. The sequence is that of L-lactate dehydrogenase 2 from Peribacillus psychrosaccharolyticus (Bacillus psychrosaccharolyticus).